We begin with the raw amino-acid sequence, 145 residues long: Hemoglobin subunit beta (145 aa).

The 145-residue stretch at Met-1–His-145 folds into the Globin domain. Thr-11 is modified (phosphothreonine). Position 43 is a phosphoserine (Ser-43). Lys-58 is subject to N6-acetyllysine. His-62 serves as a coordination point for heme b. Residue Lys-81 is modified to N6-acetyllysine. Position 91 (His-91) interacts with heme b. Cys-92 is subject to S-nitrosocysteine.

It belongs to the globin family. As to quaternary structure, heterotetramer of two alpha chains and two beta chains. Red blood cells.

Functionally, involved in oxygen transport from the lung to the various peripheral tissues. This is Hemoglobin subunit beta (HBB) from Bos mutus grunniens (Wild yak).